A 31-amino-acid chain; its full sequence is Cliotide T14 (31 aa).

The cyclopeptide (Asp-Asn) cross-link spans 1-31 (DTIPCGESCVWIPCISSILGCSCKDKVCYHN). Cystine bridges form between Cys-5-Cys-21, Cys-9-Cys-23, and Cys-14-Cys-28.

In terms of processing, contains 3 disulfide bonds. Post-translationally, this is a cyclic peptide. In terms of tissue distribution, expressed in seed but not in root nodules.

Functionally, probably participates in a plant defense mechanism. Not active against Gram-negative bacterium E.coli ATCC 700926 or Gram-positive bacterium S.aureus ATCC 12600 up to a concentration of 100 uM under low-salt conditions. The sequence is that of Cliotide T14 from Clitoria ternatea (Butterfly pea).